We begin with the raw amino-acid sequence, 114 residues long: T cell receptor alpha variable 12-3 (114 aa).

An N-terminal signal peptide occupies residues 1–21 (MMKSLRVLLVILWLQLSWVWS). Positions 24–114 (KEVEQDPGPL…DSATYLCAMS (91 aa)) constitute an Ig-like domain. N-linked (GlcNAc...) asparagine glycosylation is present at Asn44. Cysteines 45 and 111 form a disulfide.

In terms of assembly, alpha-beta TR is a heterodimer composed of an alpha and beta chain; disulfide-linked. The alpha-beta TR is associated with the transmembrane signaling CD3 coreceptor proteins to form the TR-CD3 (TcR or TCR). The assembly of alpha-beta TR heterodimers with CD3 occurs in the endoplasmic reticulum where a single alpha-beta TR heterodimer associates with one CD3D-CD3E heterodimer, one CD3G-CD3E heterodimer and one CD247 homodimer forming a stable octameric structure. CD3D-CD3E and CD3G-CD3E heterodimers preferentially associate with TR alpha and TR beta chains, respectively. The association of the CD247 homodimer is the last step of TcR assembly in the endoplasmic reticulum and is required for transport to the cell surface.

It is found in the cell membrane. V region of the variable domain of T cell receptor (TR) alpha chain that participates in the antigen recognition. Alpha-beta T cell receptors are antigen specific receptors which are essential to the immune response and are present on the cell surface of T lymphocytes. Recognize peptide-major histocompatibility (MH) (pMH) complexes that are displayed by antigen presenting cells (APC), a prerequisite for efficient T cell adaptive immunity against pathogens. Binding of alpha-beta TR to pMH complex initiates TR-CD3 clustering on the cell surface and intracellular activation of LCK that phosphorylates the ITAM motifs of CD3G, CD3D, CD3E and CD247 enabling the recruitment of ZAP70. In turn ZAP70 phosphorylates LAT, which recruits numerous signaling molecules to form the LAT signalosome. The LAT signalosome propagates signal branching to three major signaling pathways, the calcium, the mitogen-activated protein kinase (MAPK) kinase and the nuclear factor NF-kappa-B (NF-kB) pathways, leading to the mobilization of transcription factors that are critical for gene expression and essential for T cell growth and differentiation. The T cell repertoire is generated in the thymus, by V-(D)-J rearrangement. This repertoire is then shaped by intrathymic selection events to generate a peripheral T cell pool of self-MH restricted, non-autoaggressive T cells. Post-thymic interaction of alpha-beta TR with the pMH complexes shapes TR structural and functional avidity. The polypeptide is T cell receptor alpha variable 12-3 (Homo sapiens (Human)).